Consider the following 701-residue polypeptide: Sulfate anion transporter 1 (701 aa).

Positions 1–20 (MDESPEPLQQGRGPVPVRRQ) are disordered. The next 2 membrane-spanning stretches (helical) occupy residues 68–90 (YLAG…AIAY) and 94–116 (AGLQ…FLMG). Residues asparagine 158 and asparagine 163 are each glycosylated (N-linked (GlcNAc...) asparagine). A run of 7 helical transmembrane segments spans residues 176–198 (YAIR…MGVL), 255–277 (GAGQ…LLAA), 290–309 (VPLP…SHFG), 342–364 (ALDA…EMFA), 377–399 (LLAV…SAAL), 412–434 (TQLS…APLF), and 472–494 (LVWA…LAGV). Residues 527–687 (EFEGLVPEPG…LSVHDAVQTA (161 aa)) form the STAS domain.

This sequence belongs to the SLC26A/SulP transporter (TC 2.A.53) family. In terms of tissue distribution, expressed most abundantly in the kidney and liver, with lower levels in the pancreas, testis, brain, small intestine, colon, and lung.

The protein resides in the cell membrane. It is found in the basolateral cell membrane. It carries out the reaction thiosulfate(in) + sulfate(out) = thiosulfate(out) + sulfate(in). The catalysed reaction is 2 hydrogencarbonate(out) + sulfate(in) = 2 hydrogencarbonate(in) + sulfate(out). The enzyme catalyses oxalate(in) + sulfate(out) = oxalate(out) + sulfate(in). It catalyses the reaction oxalate(in) + 2 hydrogencarbonate(out) = oxalate(out) + 2 hydrogencarbonate(in). In terms of biological role, sodium-independent sulfate anion transporter. Can transport other anions including bicarbonate, thiosulfate and oxalate by mediating sulfate-thiosulfate, sulfate-hydrogencarbonate and sulfate-oxalate anion exchange. Mediates oxalate-hydrogencarbonate anion exchange. The polypeptide is Sulfate anion transporter 1 (SLC26A1) (Homo sapiens (Human)).